A 664-amino-acid polypeptide reads, in one-letter code: Methionine--tRNA ligase (664 aa).

A 'HIGH' region motif is present at residues 13–23; it reads PYTNGPCHIGH. Zn(2+) is bound by residues Cys144, Cys147, Cys156, and Cys160. The 'KMSKS' region signature appears at 327–331; sequence KFSKS. Residue Lys330 coordinates ATP. The region spanning 566 to 664 is the tRNA-binding domain; that stretch reads EFGNLDIRIA…RPVKPGTKIR (99 aa).

The protein belongs to the class-I aminoacyl-tRNA synthetase family. MetG type 1 subfamily. In terms of assembly, homodimer. Zn(2+) is required as a cofactor.

It localises to the cytoplasm. The catalysed reaction is tRNA(Met) + L-methionine + ATP = L-methionyl-tRNA(Met) + AMP + diphosphate. Functionally, is required not only for elongation of protein synthesis but also for the initiation of all mRNA translation through initiator tRNA(fMet) aminoacylation. The protein is Methionine--tRNA ligase of Methanoculleus marisnigri (strain ATCC 35101 / DSM 1498 / JR1).